The following is a 414-amino-acid chain: Riboflavin biosynthesis protein RibBA (414 aa).

The tract at residues 1 to 204 is DHBP synthase; sequence MTRFDTIERA…IADMIAWRRK (204 aa). D-ribulose 5-phosphate contacts are provided by residues 28–29, D33, 141–145, and E165; these read RE and RPGHT. E29 lines the Mg(2+) pocket. Residue H144 participates in Mg(2+) binding. The interval 205-414 is GTP cyclohydrolase II; that stretch reads HEKQVVRVAE…DDLDLGETAQ (210 aa). 255–259 serves as a coordination point for GTP; it reads RVHSE. Residues C260, C271, and C273 each contribute to the Zn(2+) site. Residues Q276, 299 to 301, and T321 contribute to the GTP site; that span reads EGR. Residue D333 is the Proton acceptor; for GTP cyclohydrolase activity of the active site. The Nucleophile; for GTP cyclohydrolase activity role is filled by R335. The GTP site is built by T356 and K361.

The protein in the N-terminal section; belongs to the DHBP synthase family. In the C-terminal section; belongs to the GTP cyclohydrolase II family. Requires Mg(2+) as cofactor. It depends on Mn(2+) as a cofactor. Zn(2+) is required as a cofactor.

The enzyme catalyses D-ribulose 5-phosphate = (2S)-2-hydroxy-3-oxobutyl phosphate + formate + H(+). It carries out the reaction GTP + 4 H2O = 2,5-diamino-6-hydroxy-4-(5-phosphoribosylamino)-pyrimidine + formate + 2 phosphate + 3 H(+). It participates in cofactor biosynthesis; riboflavin biosynthesis; 2-hydroxy-3-oxobutyl phosphate from D-ribulose 5-phosphate: step 1/1. The protein operates within cofactor biosynthesis; riboflavin biosynthesis; 5-amino-6-(D-ribitylamino)uracil from GTP: step 1/4. Its function is as follows. Catalyzes the conversion of D-ribulose 5-phosphate to formate and 3,4-dihydroxy-2-butanone 4-phosphate. In terms of biological role, catalyzes the conversion of GTP to 2,5-diamino-6-ribosylamino-4(3H)-pyrimidinone 5'-phosphate (DARP), formate and pyrophosphate. The sequence is that of Riboflavin biosynthesis protein RibBA from Nocardia farcinica (strain IFM 10152).